A 241-amino-acid chain; its full sequence is Adenylate kinase 3 (241 aa).

38–43 (GCGKGT) contributes to the ATP binding site. Residues 58 to 87 (ATGDMLRAAVAAKTPLGIKAKEAMDKGELV) are NMP. Residues T59, R64, 85–87 (ELV), 113–116 (GFPR), and Q120 contribute to the AMP site. The interval 154 to 191 (GRWIHPSSGRSYHTKFAPPKTPGLDDVTGEPLIQRKDD) is LID. R155 lines the ATP pocket. Residues R188 and R199 each contribute to the AMP site.

Belongs to the adenylate kinase family.

It is found in the cytoplasm. It carries out the reaction AMP + ATP = 2 ADP. Its function is as follows. Catalyzes the reversible transfer of the terminal phosphate group between ATP and AMP. Plays an important role in cellular energy homeostasis and in adenine nucleotide metabolism. This Oryza sativa subsp. japonica (Rice) protein is Adenylate kinase 3 (ADK-A).